A 357-amino-acid chain; its full sequence is 3-isopropylmalate dehydrogenase (357 aa).

Substrate is bound by residues Arg97, Arg107, Arg135, and Asp224. The Mg(2+) site is built by Asp224, Asp248, and Asp252. 282–294 (GSAPDIAGQDKAN) provides a ligand contact to NAD(+).

Belongs to the isocitrate and isopropylmalate dehydrogenases family. LeuB type 1 subfamily. In terms of assembly, homodimer. Requires Mg(2+) as cofactor. The cofactor is Mn(2+).

It localises to the cytoplasm. The enzyme catalyses (2R,3S)-3-isopropylmalate + NAD(+) = 4-methyl-2-oxopentanoate + CO2 + NADH. It functions in the pathway amino-acid biosynthesis; L-leucine biosynthesis; L-leucine from 3-methyl-2-oxobutanoate: step 3/4. In terms of biological role, catalyzes the oxidation of 3-carboxy-2-hydroxy-4-methylpentanoate (3-isopropylmalate) to 3-carboxy-4-methyl-2-oxopentanoate. The product decarboxylates to 4-methyl-2 oxopentanoate. The chain is 3-isopropylmalate dehydrogenase from Parasynechococcus marenigrum (strain WH8102).